Here is a 951-residue protein sequence, read N- to C-terminus: Metal transporter CNNM1 (951 aa).

Residues 23–43 (AVLLLFFSLSPRPPAAAAWLL) form a helical membrane-spanning segment. Residues 116 to 135 (GGVAPSAVPTRPPGPQRCRE) form a disordered region. Positions 218–414 (LLPPAWLRAL…DPYSDLVKEE (197 aa)) constitute a CNNM transmembrane domain. 3 consecutive transmembrane segments (helical) span residues 222 to 242 (AWLRALGALLLLALSALFSGL), 282 to 302 (LLCTLLLGQAGANAALAGWLY), and 321 to 341 (IHFPWLPALVCTGAVFLGAEI). CBS domains follow at residues 433–495 (LTPL…CTPL) and 502–568 (YNRP…ILDE). Composition is skewed to polar residues over residues 731–740 (SRCSGLNRSE) and 814–824 (KAPTTRGTPQT). 2 disordered regions span residues 731–753 (SRCSGLNRSESPNRERSDFGGSN) and 795–830 (MDSSPQSPDMEAFTDGDSTKAPTTRGTPQTPKDDPA). Residues threonine 821 and threonine 824 each carry the phosphothreonine modification. Residue serine 850 is modified to Phosphoserine. The disordered stretch occupies residues 920-951 (KLLRTLSGQKRKRSPEGERTSEDNSNLTPLIT). Residues 942-951 (DNSNLTPLIT) show a composition bias toward polar residues.

This sequence belongs to the ACDP family. Restricted to brain and testis.

It localises to the cell membrane. Probable metal transporter. In Homo sapiens (Human), this protein is Metal transporter CNNM1 (CNNM1).